The chain runs to 509 residues: GMP synthase [glutamine-hydrolyzing] (509 aa).

Residues 4–193 (NVLILDFGSQ…LVKIAQVPQN (190 aa)) form the Glutamine amidotransferase type-1 domain. Cys-79 functions as the Nucleophile in the catalytic mechanism. Catalysis depends on residues His-167 and Glu-169. Residues 194–384 (FTPNAFVSDM…LGIDAELLGR (191 aa)) form the GMPS ATP-PPase domain. ATP is bound at residue 221–227 (SGGVDST).

As to quaternary structure, homodimer.

It carries out the reaction XMP + L-glutamine + ATP + H2O = GMP + L-glutamate + AMP + diphosphate + 2 H(+). It participates in purine metabolism; GMP biosynthesis; GMP from XMP (L-Gln route): step 1/1. Functionally, catalyzes the synthesis of GMP from XMP. This Flavobacterium psychrophilum (strain ATCC 49511 / DSM 21280 / CIP 103535 / JIP02/86) protein is GMP synthase [glutamine-hydrolyzing].